The sequence spans 288 residues: Quinate/shikimate dehydrogenase (288 aa).

K71 and D107 together coordinate substrate. NAD(+) is bound by residues A132 to A135, N155 to D158, K205, C232 to N235, and G255.

It belongs to the shikimate dehydrogenase family. In terms of assembly, homodimer.

The catalysed reaction is L-quinate + NAD(+) = 3-dehydroquinate + NADH + H(+). The enzyme catalyses L-quinate + NADP(+) = 3-dehydroquinate + NADPH + H(+). It carries out the reaction shikimate + NADP(+) = 3-dehydroshikimate + NADPH + H(+). It catalyses the reaction shikimate + NAD(+) = 3-dehydroshikimate + NADH + H(+). The protein operates within metabolic intermediate biosynthesis; chorismate biosynthesis; chorismate from D-erythrose 4-phosphate and phosphoenolpyruvate: step 4/7. Its function is as follows. The actual biological function of YdiB remains unclear, nor is it known whether 3-dehydroshikimate or quinate represents the natural substrate. Catalyzes the reversible NAD-dependent reduction of both 3-dehydroshikimate (DHSA) and 3-dehydroquinate to yield shikimate (SA) and quinate, respectively. It can use both NAD or NADP for catalysis, however it has higher catalytic efficiency with NAD. In Escherichia coli O1:K1 / APEC, this protein is Quinate/shikimate dehydrogenase.